Reading from the N-terminus, the 106-residue chain is NADH-quinone oxidoreductase subunit K (106 aa).

The next 3 helical transmembrane spans lie at 9-29, 35-55, and 70-90; these read LGHY…GIFL, IVML…MVAF, and FILT…VIYF.

The protein belongs to the complex I subunit 4L family. In terms of assembly, NDH-1 is composed of 14 different subunits. Subunits NuoA, H, J, K, L, M, N constitute the membrane sector of the complex.

It localises to the cell inner membrane. It carries out the reaction a quinone + NADH + 5 H(+)(in) = a quinol + NAD(+) + 4 H(+)(out). In terms of biological role, NDH-1 shuttles electrons from NADH, via FMN and iron-sulfur (Fe-S) centers, to quinones in the respiratory chain. The immediate electron acceptor for the enzyme in this species is believed to be ubiquinone. Couples the redox reaction to proton translocation (for every two electrons transferred, four hydrogen ions are translocated across the cytoplasmic membrane), and thus conserves the redox energy in a proton gradient. The sequence is that of NADH-quinone oxidoreductase subunit K from Granulibacter bethesdensis (strain ATCC BAA-1260 / CGDNIH1).